A 1009-amino-acid chain; its full sequence is C2 domain-containing protein aex-1 (1009 aa).

Residues Asn812 to Leu945 enclose the C2 domain.

Belongs to the unc-13 family. Expressed in intestine, body wall muscles and some amphid neurons.

Its function is as follows. Involved in retrograde signaling from post-synaptic cells to pre-synaptic neurons, probably by regulating vesicle exocytosis in post-synaptic cells. Acts in muscles, to regulate the localization of synaptic vesicle fusion protein unc-13 likely during vesicle exocytosis and thus regulate retrograde signaling at the neuromuscular junction (NMJ). Regulates anterior body muscle contractions (aBOC) and the expulsion steps during the defecation motor program (DMP). Probably by regulating DMP, plays a homeostatic role in the uptake of triglycerides. Regulates locomotion. The polypeptide is C2 domain-containing protein aex-1 (Caenorhabditis elegans).